The sequence spans 276 residues: Sulfur carrier protein FdhD (276 aa).

The active-site Cysteine persulfide intermediate is cysteine 120.

It belongs to the FdhD family.

Its subcellular location is the cytoplasm. Required for formate dehydrogenase (FDH) activity. Acts as a sulfur carrier protein that transfers sulfur from IscS to the molybdenum cofactor prior to its insertion into FDH. This Bordetella parapertussis (strain 12822 / ATCC BAA-587 / NCTC 13253) protein is Sulfur carrier protein FdhD.